Consider the following 512-residue polypeptide: MSEIKEARLQKARSLVSKGFASYAQSFKVSNTTSFLLQEFDYLENGQEADFSVSVAGRVLAKRVMGKIAFFTISDQEGQIQLYLDKRIINLNLEKQKLLSFEDIKEIVDIGDWIGVYGTIKKTNKGELSIKVEKWEMLSKSLQPLPDKWHGLTDIEKRYRQRYLDLIVNPHSKNVFKTRAKCISFIRKWLDNRNFLEIETPILQSEAGGAEARPFITHHNTLDIPLYLRIATELHLKRMVVGGFEKVYEMGRIFRNEGISTRHNPEFTSVEIYEAYSDYFDMMNLTEELIKDVVADSCGSLIINYQNKEIDFSKPWLRISMKDIVKKYTGIDFDSFSGDFLAAKQAVKNINVDLSNKVNTMGRLLNEVFEQKVESKLIEPTFVIDYPVEISPLARPHFDNKEIVQRFELFIVGRELANAFSELIDPVDQRERMQLQQSLRDEGDLEAHCIDEDFLNALEIGMPPTGGLGIGIDRLIMLITNSASIRDVIPFPLLKPEITSKKSEKLPLNEVK.

Glutamate 408 and glutamate 415 together coordinate Mg(2+).

Belongs to the class-II aminoacyl-tRNA synthetase family. As to quaternary structure, homodimer. It depends on Mg(2+) as a cofactor.

It is found in the cytoplasm. The catalysed reaction is tRNA(Lys) + L-lysine + ATP = L-lysyl-tRNA(Lys) + AMP + diphosphate. This is Lysine--tRNA ligase from Prochlorococcus marinus (strain MIT 9215).